We begin with the raw amino-acid sequence, 557 residues long: Formate--tetrahydrofolate ligase 2 (557 aa).

An ATP-binding site is contributed by 66-73 (TPAGEGKT).

This sequence belongs to the formate--tetrahydrofolate ligase family.

It carries out the reaction (6S)-5,6,7,8-tetrahydrofolate + formate + ATP = (6R)-10-formyltetrahydrofolate + ADP + phosphate. Its pathway is one-carbon metabolism; tetrahydrofolate interconversion. This chain is Formate--tetrahydrofolate ligase 2, found in Streptococcus pyogenes serotype M5 (strain Manfredo).